We begin with the raw amino-acid sequence, 363 residues long: Protein CPn_1058/CP_0792/CPj1058/CpB1100 (363 aa).

Residues 1–27 (MKLYQTLRGIVLVSTGCIFLGMHGGYA) form the signal peptide.

The protein belongs to the chlamydial CPn_1058/CT_355/TC_0634 family.

The protein is Protein CPn_1058/CP_0792/CPj1058/CpB1100 of Chlamydia pneumoniae (Chlamydophila pneumoniae).